We begin with the raw amino-acid sequence, 162 residues long: MLLGKRQRPPINRTTSLSEIKFDLNLPSESEPSNQQKPTVASPYGSNGQAVTAAVDQNRGFLDQRLLSMVTPRGNLRRHSGDFSDAGHFLRSCALCERLLVPGRDIYMYRGDKAFCSSECRQEQMAQDERKEKGKSAAPAKEPAVTAPARAKPGKGRAAAAV.

2 disordered regions span residues 25–47 and 121–162; these read NLPS…YGSN and RQEQ…AAAV. Over residues 27–47 the composition is skewed to polar residues; the sequence is PSESEPSNQQKPTVASPYGSN. The FLZ-type zinc finger occupies 88 to 132; the sequence is HFLRSCALCERLLVPGRDIYMYRGDKAFCSSECRQEQMAQDERKE. A compositionally biased stretch (low complexity) spans 147 to 162; sequence APARAKPGKGRAAAAV.

It belongs to the FLZ family. Interacts with KIN10 and KIN11 via its FLZ-type zinc finger domain. Early expressed in hypocotyl and cotyledon. Later expressed in old or senescing leaves and in pistil, pollen and filament of open flowers.

It localises to the nucleus. The protein resides in the cytoplasm. Its subcellular location is the endoplasmic reticulum. May act as an adapter to facilitate the interaction of SnRK1 complex with effector proteins, conferring tissue- and stimulus-type specific differences in the SnRK1 regulation pathway. Negatively regulates KIN10 leading to a repression of the SnRK1 signaling pathway. The protein is FCS-Like Zinc finger 6 of Arabidopsis thaliana (Mouse-ear cress).